We begin with the raw amino-acid sequence, 313 residues long: MGKGKNKMHEPKNGRPQRGANGHSSRQNHRRMEMKYDNSEKMKFPVKLAMWDFDHCDPKRCSGKKLERLGLIKSLRVGQKFQGIVVSPNGKGVVCPDDLEIVEQHGASVVECSWARLEEVPFNKIGGKHERLLPYLVAANQVNYGRPWRLNCVEALAACFAIVGRMDWASELLSHFSWGMGFLELNKELLEIYQQCTDCDSVKRAEEEWLQKLEKETQERKSRAKEEDIWMMGNINRRGNGSQSDTSESEENSEQSDLEGNNQCIEYDSLGNAIRIDNMKSREAQSEESEDEESGSKENGEPLSYDPLGNLIR.

The disordered stretch occupies residues 1–30; sequence MGKGKNKMHEPKNGRPQRGANGHSSRQNHR. Residues Ser62, Val110, Leu133, and Trp148 each contribute to the S-adenosyl-L-methionine site. Over residues 215–228 the composition is skewed to basic and acidic residues; sequence KETQERKSRAKEED. Residues 215–313 are disordered; sequence KETQERKSRA…SYDPLGNLIR (99 aa). Residues 237–246 are compositionally biased toward polar residues; sequence RRGNGSQSDT. Positions 247 to 257 are enriched in acidic residues; sequence SESEENSEQSD. Phosphoserine is present on residues Ser286 and Ser289.

The protein belongs to the TDD superfamily. TSR3 family.

It is found in the cytoplasm. It localises to the nucleus. It catalyses the reaction an N(1)-methylpseudouridine in rRNA + S-adenosyl-L-methionine = N(1)-methyl-N(3)-[(3S)-3-amino-3-carboxypropyl]pseudouridine in rRNA + S-methyl-5'-thioadenosine + H(+). The catalysed reaction is N(1)-methylpseudouridine(1191) in yeast 18S rRNA + S-adenosyl-L-methionine = N(1)-methyl-N(3)-[(3S)-3-amino-3-carboxypropyl]pseudouridine(1191) in yeast 18S rRNA + S-methyl-5'-thioadenosine + H(+). Aminocarboxypropyltransferase that catalyzes the aminocarboxypropyl transfer on pseudouridine at position 1191 (Psi1191) in 18S rRNA. It constitutes the last step in biosynthesis of the hypermodified N1-methyl-N3-(3-amino-3-carboxypropyl) pseudouridine (m1acp3-Psi) conserved in eukaryotic 18S rRNA. Required for processing 35S pre-rRNA at site D. The protein is 18S rRNA aminocarboxypropyltransferase of Saccharomyces cerevisiae (strain ATCC 204508 / S288c) (Baker's yeast).